The primary structure comprises 291 residues: Acetyl-coenzyme A carboxylase carboxyl transferase subunit beta (291 aa).

The CoA carboxyltransferase N-terminal domain maps to Met-34–Glu-291. Zn(2+)-binding residues include Cys-38, Cys-41, Cys-57, and Cys-60. A C4-type zinc finger spans residues Cys-38–Cys-60.

The protein belongs to the AccD/PCCB family. Acetyl-CoA carboxylase is a heterohexamer composed of biotin carboxyl carrier protein (AccB), biotin carboxylase (AccC) and two subunits each of ACCase subunit alpha (AccA) and ACCase subunit beta (AccD). It depends on Zn(2+) as a cofactor.

It is found in the cytoplasm. The catalysed reaction is N(6)-carboxybiotinyl-L-lysyl-[protein] + acetyl-CoA = N(6)-biotinyl-L-lysyl-[protein] + malonyl-CoA. Its pathway is lipid metabolism; malonyl-CoA biosynthesis; malonyl-CoA from acetyl-CoA: step 1/1. In terms of biological role, component of the acetyl coenzyme A carboxylase (ACC) complex. Biotin carboxylase (BC) catalyzes the carboxylation of biotin on its carrier protein (BCCP) and then the CO(2) group is transferred by the transcarboxylase to acetyl-CoA to form malonyl-CoA. The protein is Acetyl-coenzyme A carboxylase carboxyl transferase subunit beta of Clostridium botulinum (strain Alaska E43 / Type E3).